Consider the following 461-residue polypeptide: V-type ATP synthase beta chain (461 aa).

This sequence belongs to the ATPase alpha/beta chains family.

Its function is as follows. Produces ATP from ADP in the presence of a proton gradient across the membrane. The V-type beta chain is a regulatory subunit. The protein is V-type ATP synthase beta chain of Streptococcus pneumoniae (strain CGSP14).